The sequence spans 253 residues: Triosephosphate isomerase (253 aa).

Residue 9–11 (NWK) participates in substrate binding. Histidine 95 acts as the Electrophile in catalysis. The Proton acceptor role is filled by glutamate 167. Residues glycine 173, serine 213, and 234-235 (GG) each bind substrate. Serine 213 carries the phosphoserine modification.

It belongs to the triosephosphate isomerase family. As to quaternary structure, homodimer.

It is found in the cytoplasm. The catalysed reaction is D-glyceraldehyde 3-phosphate = dihydroxyacetone phosphate. The protein operates within carbohydrate biosynthesis; gluconeogenesis. It functions in the pathway carbohydrate degradation; glycolysis; D-glyceraldehyde 3-phosphate from glycerone phosphate: step 1/1. Functionally, involved in the gluconeogenesis. Catalyzes stereospecifically the conversion of dihydroxyacetone phosphate (DHAP) to D-glyceraldehyde-3-phosphate (G3P). This chain is Triosephosphate isomerase, found in Bacillus pumilus (strain SAFR-032).